Consider the following 213-residue polypeptide: Orotate phosphoribosyltransferase (213 aa).

Lys-26 contributes to the 5-phospho-alpha-D-ribose 1-diphosphate binding site. 34–35 (FF) lines the orotate pocket. Residues 72 to 73 (YK), Arg-99, Lys-100, Lys-103, His-105, and 124 to 132 (DDVITAGTA) each bind 5-phospho-alpha-D-ribose 1-diphosphate. Residues Thr-128 and Arg-156 each contribute to the orotate site.

Belongs to the purine/pyrimidine phosphoribosyltransferase family. PyrE subfamily. As to quaternary structure, homodimer. Requires Mg(2+) as cofactor.

The catalysed reaction is orotidine 5'-phosphate + diphosphate = orotate + 5-phospho-alpha-D-ribose 1-diphosphate. The protein operates within pyrimidine metabolism; UMP biosynthesis via de novo pathway; UMP from orotate: step 1/2. In terms of biological role, catalyzes the transfer of a ribosyl phosphate group from 5-phosphoribose 1-diphosphate to orotate, leading to the formation of orotidine monophosphate (OMP). The chain is Orotate phosphoribosyltransferase from Salmonella paratyphi A (strain ATCC 9150 / SARB42).